The following is a 139-amino-acid chain: Large ribosomal subunit protein uL16 (139 aa).

Over residues 1-20 (MLIPKRTKYRKQHRPVRRGM) the composition is skewed to basic residues. A disordered region spans residues 1-21 (MLIPKRTKYRKQHRPVRRGMS).

It belongs to the universal ribosomal protein uL16 family. Part of the 50S ribosomal subunit.

In terms of biological role, binds 23S rRNA and is also seen to make contacts with the A and possibly P site tRNAs. The protein is Large ribosomal subunit protein uL16 of Bifidobacterium adolescentis (strain ATCC 15703 / DSM 20083 / NCTC 11814 / E194a).